The primary structure comprises 249 residues: Probable transcriptional regulatory protein LBJ_0543 (249 aa).

It belongs to the TACO1 family.

The protein localises to the cytoplasm. The sequence is that of Probable transcriptional regulatory protein LBJ_0543 from Leptospira borgpetersenii serovar Hardjo-bovis (strain JB197).